Consider the following 465-residue polypeptide: Ran-binding protein 3-like (465 aa).

The 142-residue stretch at 276–417 (SQPSRKCLLE…ALQSFNKQRD (142 aa)) folds into the RanBD1 domain.

As to quaternary structure, interacts with SMAD1, SMAD5 and SMAD8; the interaction (with SMAD at least) increases when SMAD1 is not phosphorylated and mediates SMAD1 nuclear export.

Its subcellular location is the nucleus. The protein localises to the cytoplasm. Nuclear export factor for BMP-specific SMAD1/5/8 that plays a critical role in terminating BMP signaling and regulating mesenchymal stem cell differentiation by blocking osteoblast differentiation to promote myogenic differention. Directly recognizes dephosphorylated SMAD1/5/8 and mediates their nuclear export in a Ran-dependent manner. The protein is Ran-binding protein 3-like (RANBP3L) of Homo sapiens (Human).